Consider the following 906-residue polypeptide: Protein translocase subunit SecA (906 aa).

ATP contacts are provided by residues Gln-87, 105-109, and Asp-507; that span reads GEGKT. Zn(2+)-binding residues include Cys-890, Cys-892, Cys-901, and His-902.

This sequence belongs to the SecA family. Monomer and homodimer. Part of the essential Sec protein translocation apparatus which comprises SecA, SecYEG and auxiliary proteins SecDF-YajC and YidC. It depends on Zn(2+) as a cofactor.

Its subcellular location is the cell inner membrane. The protein resides in the cytoplasm. It carries out the reaction ATP + H2O + cellular proteinSide 1 = ADP + phosphate + cellular proteinSide 2.. Part of the Sec protein translocase complex. Interacts with the SecYEG preprotein conducting channel. Has a central role in coupling the hydrolysis of ATP to the transfer of proteins into and across the cell membrane, serving both as a receptor for the preprotein-SecB complex and as an ATP-driven molecular motor driving the stepwise translocation of polypeptide chains across the membrane. The chain is Protein translocase subunit SecA from Thiobacillus denitrificans (strain ATCC 25259 / T1).